A 2327-amino-acid polypeptide reads, in one-letter code: Kielin/chordin-like protein (2327 aa).

Positions 1–19 (MNTLLWTILLPLLFSFCVC) are cleaved as a signal peptide. A disordered region spans residues 250–294 (LPLPYSLSGERQMEDEEIQREPRAPDLSDTDHYQQQQSEVPAQLL). A compositionally biased stretch (basic and acidic residues) spans 268–281 (QREPRAPDLSDTDH). Residues 291–332 (AQLLAKDDRLQRLEEAVKGLTNMIDMIKSQNADLQARVIALE) adopt a coiled-coil conformation. VWFC domains lie at 339–400 (STCV…SVGP), 401–438 (CMSC…PLCA), 439–493 (TGCS…AKCQ), 494–553 (QGCE…PSCP), 554–610 (VCEL…LDCS), 611–669 (ACEM…SQCQ), 670–728 (SCMD…PMCD), 729–786 (GCLY…PRCE), 787–847 (GCEY…PSCD), 848–907 (VCDF…PVCK), 908–966 (VCVQ…PVCD), 967–1025 (SCSY…AKCP), 1026–1083 (DCRY…NNCN), 1084–1142 (GCNY…PQCP), 1146–1203 (ADCP…RSCD), 1204–1260 (GCLM…KECQ), 1261–1319 (DCQY…PVCD), 1321–1377 (CSYN…CPIC), 1378–1439 (QGCH…DGCN), 1440–1495 (YSGR…PRCT), 1496–1555 (GICK…PVCD), 1556–1614 (RCFY…RECP), 1615–1673 (VCRY…PRCR), 1674–1731 (GCVY…PVCA), 1732–1799 (DCIS…SSCA), 1800–1860 (QALS…PVCN), 1861–1924 (ECVV…HECQ), and 1928–1988 (VSCW…PHCI). Residues 1992-2168 (ATCIAFGDPH…SSNDSSSSCW (177 aa)) enclose the VWFD domain. 2 disulfides stabilise this stretch: C1994/C2126 and C2016/C2167. The TIL domain maps to 2259 to 2319 (CPHDRGYVFD…ESHCIPPESC (61 aa)).

Its subcellular location is the secreted. May be a signaling molecule that mediates inductive activities of the embryonic midline. Able to dorsalize mesoderm. This is Kielin/chordin-like protein (kcp) from Xenopus laevis (African clawed frog).